Here is a 376-residue protein sequence, read N- to C-terminus: Erythronate-4-phosphate dehydrogenase (376 aa).

Serine 45 and threonine 67 together coordinate substrate. Residue aspartate 147 coordinates NAD(+). Residue arginine 209 is part of the active site. Aspartate 233 lines the NAD(+) pocket. Glutamate 238 is a catalytic residue. The active-site Proton donor is histidine 255. Residue glycine 258 participates in NAD(+) binding. Substrate is bound at residue tyrosine 259.

Belongs to the D-isomer specific 2-hydroxyacid dehydrogenase family. PdxB subfamily. As to quaternary structure, homodimer.

The protein resides in the cytoplasm. It carries out the reaction 4-phospho-D-erythronate + NAD(+) = (R)-3-hydroxy-2-oxo-4-phosphooxybutanoate + NADH + H(+). It participates in cofactor biosynthesis; pyridoxine 5'-phosphate biosynthesis; pyridoxine 5'-phosphate from D-erythrose 4-phosphate: step 2/5. Functionally, catalyzes the oxidation of erythronate-4-phosphate to 3-hydroxy-2-oxo-4-phosphonooxybutanoate. The protein is Erythronate-4-phosphate dehydrogenase of Shewanella baltica (strain OS223).